A 316-amino-acid polypeptide reads, in one-letter code: MTKEFHHVTVLLHETIDMLDVKPDGIYVDATLGGAGHSEYLLSKLSEKGHLYAFDQDQNAIDNAQKRLAPYIEKGMVTFIKDNFRHLQARLREAGVQEIDGICYDLGVSSPQLDQRERGFSYKKDAPLDMRMNQDASLTAYEVVNHYDYHDLVRIFFKYGEDKFSKQIARKIEQAREVKPIETTTELAEIIKSAKPAKELKKKGHPAKQIFQAIRIEVNDELGAADESIQQAMDMLALDGRISVITFHSLEDRLTKQLFKEASTVEVPKGLPFIPDDLKPKMELVARKPILPSAEELEANNRSHSAKLRVARKIHK.

S-adenosyl-L-methionine contacts are provided by residues 35–37 (AGH), aspartate 55, phenylalanine 84, aspartate 105, and glutamine 112.

Belongs to the methyltransferase superfamily. RsmH family.

The protein resides in the cytoplasm. It carries out the reaction cytidine(1402) in 16S rRNA + S-adenosyl-L-methionine = N(4)-methylcytidine(1402) in 16S rRNA + S-adenosyl-L-homocysteine + H(+). Its function is as follows. Specifically methylates the N4 position of cytidine in position 1402 (C1402) of 16S rRNA. The protein is Ribosomal RNA small subunit methyltransferase H of Streptococcus pneumoniae (strain Taiwan19F-14).